The chain runs to 193 residues: Large ribosomal subunit protein uL5 (193 aa).

The protein belongs to the universal ribosomal protein uL5 family. As to quaternary structure, part of the 50S ribosomal subunit; part of the 5S rRNA/L5/L18/L25 subcomplex. Contacts the 5S rRNA and the P site tRNA. Forms a bridge to the 30S subunit in the 70S ribosome.

Functionally, this is one of the proteins that bind and probably mediate the attachment of the 5S RNA into the large ribosomal subunit, where it forms part of the central protuberance. In the 70S ribosome it contacts protein S13 of the 30S subunit (bridge B1b), connecting the 2 subunits; this bridge is implicated in subunit movement. Contacts the P site tRNA; the 5S rRNA and some of its associated proteins might help stabilize positioning of ribosome-bound tRNAs. This chain is Large ribosomal subunit protein uL5, found in Rhizorhabdus wittichii (strain DSM 6014 / CCUG 31198 / JCM 15750 / NBRC 105917 / EY 4224 / RW1) (Sphingomonas wittichii).